A 793-amino-acid chain; its full sequence is Kinesin-like protein KIN-14C (793 aa).

Positions 1–43 are disordered; the sequence is MASRNQNRPPRSPNAKKEGLGGISFDKRRKVETQGGTGRRQAF. The segment at 1–69 is globular; sequence MASRNQNRPP…IEECGKVDFT (69 aa). The segment covering 15–32 has biased composition (basic and acidic residues); that stretch reads AKKEGLGGISFDKRRKVE. Residues 120 to 375 adopt a coiled-coil conformation; it reads KENLKVSLES…EQQLAIANER (256 aa). Residues 431–772 form the Kinesin motor domain; sequence NIRVFCRVRP…LRFAARVNAC (342 aa). ATP is bound at residue 516 to 523; the sequence is GQTGSGKT.

This sequence belongs to the TRAFAC class myosin-kinesin ATPase superfamily. Kinesin family. KIN-14 subfamily.

The protein resides in the cytoplasm. It is found in the cytoskeleton. Its subcellular location is the spindle. It localises to the phragmoplast. The protein localises to the chromosome. The protein resides in the centromere. It is found in the kinetochore. Kinesin that supports microtubule movement in an ATP-dependent manner and has a minus-end directed polarity. Plays a crucial role in spindle morphogenesis in male meiosis. In mitosis, is required for normal microtubule accumulation at the spindle poles during prophase and may play a role in spindle assembly during prometaphase. The protein is Kinesin-like protein KIN-14C of Arabidopsis thaliana (Mouse-ear cress).